An 880-amino-acid chain; its full sequence is Valine--tRNA ligase (880 aa).

The short motif at 48-58 (PNITGKLHLGH) is the 'HIGH' region element. The short motif at 527–531 (KMSKS) is the 'KMSKS' region element. Residue Lys530 coordinates ATP. Coiled coils occupy residues 717 to 741 (KEELKNEEVEKKMSHVIEAIKAIRN) and 810 to 880 (LFDL…KSLK).

Belongs to the class-I aminoacyl-tRNA synthetase family. ValS type 1 subfamily. As to quaternary structure, monomer.

It is found in the cytoplasm. It carries out the reaction tRNA(Val) + L-valine + ATP = L-valyl-tRNA(Val) + AMP + diphosphate. Its function is as follows. Catalyzes the attachment of valine to tRNA(Val). As ValRS can inadvertently accommodate and process structurally similar amino acids such as threonine, to avoid such errors, it has a 'posttransfer' editing activity that hydrolyzes mischarged Thr-tRNA(Val) in a tRNA-dependent manner. This Clostridium tetani (strain Massachusetts / E88) protein is Valine--tRNA ligase.